A 334-amino-acid polypeptide reads, in one-letter code: MLNTLIVGASGYAGAELVSYVNRHPHMTITALTVSAQSNDAGKLISDLHPQLKGIVDLPLQPMSDVRDFSADVDVVFLATAHEVSHDLAPQFLQAGCVVFDLSGAFRVNDRAFYEKYYGFTHQYPELLEQAVYGLAEWNVDKLNTANLIAVPGCYPTAAQLSLKPLIDGGLLDLTQWPVINATSGVSGAGRKAAISNSFCEVSLQPYGVFTHRHQPEIAVHLGAEVIFTPHLGNFPRGILETITCRLKAGVTHAQVADVLQKAYGDKPLVRLYDKGVPALKNVVGLPFCDIGFAVQGEHLIVVATEDNLLKGAAAQAVQCANIRFGFAETQSLI.

C154 is an active-site residue.

This sequence belongs to the NAGSA dehydrogenase family. Type 1 subfamily.

The protein resides in the cytoplasm. It carries out the reaction N-acetyl-L-glutamate 5-semialdehyde + phosphate + NADP(+) = N-acetyl-L-glutamyl 5-phosphate + NADPH + H(+). Its pathway is amino-acid biosynthesis; L-arginine biosynthesis; N(2)-acetyl-L-ornithine from L-glutamate: step 3/4. Catalyzes the NADPH-dependent reduction of N-acetyl-5-glutamyl phosphate to yield N-acetyl-L-glutamate 5-semialdehyde. In Salmonella typhimurium (strain LT2 / SGSC1412 / ATCC 700720), this protein is N-acetyl-gamma-glutamyl-phosphate reductase.